Reading from the N-terminus, the 313-residue chain is Protein FixB (313 aa).

255–283 (LYLAVGISGQIQHMVGANGAQTIFAINKD) provides a ligand contact to FAD.

This sequence belongs to the ETF alpha-subunit/FixB family. In terms of assembly, heterodimer of FixA and FixB.

The protein operates within amine and polyamine metabolism; carnitine metabolism. Its function is as follows. Required for anaerobic carnitine reduction. May bring reductant to CaiA. In Salmonella agona (strain SL483), this protein is Protein FixB.